A 676-amino-acid polypeptide reads, in one-letter code: UvrABC system protein B (676 aa).

Residues 26-414 (EGLDAGLAHQ…SAGEIADQVV (389 aa)) enclose the Helicase ATP-binding domain. 39-46 (GVTGSGKT) provides a ligand contact to ATP. Residues 92 to 115 (YYDYYQPEAYVPTTDTFIEKDSSV) carry the Beta-hairpin motif. Residues 432-598 (QVDDLLSEIR…ALKRNIKDIM (167 aa)) form the Helicase C-terminal domain. Residues 636 to 671 (EKEITKLEAQMYKHAQDLEFELAAQKRDEIEKLRQQ) enclose the UVR domain.

It belongs to the UvrB family. In terms of assembly, forms a heterotetramer with UvrA during the search for lesions. Interacts with UvrC in an incision complex.

Its subcellular location is the cytoplasm. The UvrABC repair system catalyzes the recognition and processing of DNA lesions. A damage recognition complex composed of 2 UvrA and 2 UvrB subunits scans DNA for abnormalities. Upon binding of the UvrA(2)B(2) complex to a putative damaged site, the DNA wraps around one UvrB monomer. DNA wrap is dependent on ATP binding by UvrB and probably causes local melting of the DNA helix, facilitating insertion of UvrB beta-hairpin between the DNA strands. Then UvrB probes one DNA strand for the presence of a lesion. If a lesion is found the UvrA subunits dissociate and the UvrB-DNA preincision complex is formed. This complex is subsequently bound by UvrC and the second UvrB is released. If no lesion is found, the DNA wraps around the other UvrB subunit that will check the other stand for damage. The sequence is that of UvrABC system protein B from Vibrio vulnificus (strain CMCP6).